The primary structure comprises 832 residues: MVSQCQIRVVRSGGSKLDYRRSVFSADGKYLICVSGDFIKVYSTSTEECIHALQGHRKLVTGIELNPKNHLQLYSCSLDGTIKLWDFTDGILIKTFLIGCKFLSLYTSATDDLVFAVTLKNNDSASSQLVSVKLPKSASQECEAKEISVIIEDVSHLPKCTAIGRQCLYVASVKGVHLSIYYFKTKKSFRFSLKATSKKGANNIFTVVACHPSEDCIATGHMDGRIRLWRNFNHKKEYTYTSLHWHHDSVMDLAFSAQGTKLLSGGVESVLVQWPYGSEEKKEFLPRLGAAIEHISVSPHGTLYCTSHTDNKISIIDTSLKVSGIIQGLLKGTVVKTGLIVDPRSNALVLNGKPGHLQFYSLLNDRHLYNLDIVQQEFIHQAGLQYMDLVKASFSSTGRWLATVEELQGGEDSMDLEMQMKLWEYQDKSQSFVLNTTINRPHEDHITSLCFRDEGNSEKEAPTLVTTGKDGLFKVWMLNNNYDIYKQSSSWLCDFVGGYHKNQATNCCFSEDGSLLAVSFDEIITVWESSTWDLKQTFCQPPGKIRNLCFGRMSCSKYLVASTNNGFICCWNLLTCALEWRAQLDATVLQPDPLSENIAVVSCSKRWSNLFLFQPSEPRPFYTQKNICQEKVQWAVFVPKEIPEFVKSESHQWLNKSQLYFLTEKQDLLTFSSKSTEERLTPLSKQLAVEESLPVTPFHLLLGKKRQEEQEKLDAQSVRAAPSFHRGYQNSAIREVLHTPAHVLPPASVLCTVFVNSLLISKKSQSTEESKEDEEMKSEHSEADSSDETEEMESQKRFPSAFSLDVAAMLPKFQEKELRRIRRTDYSWISSL.

13 WD repeats span residues 4–43, 47–86, 90–131, 145–184, 193–230, 236–275, 278–317, 323–361, 375–424, 431–477, 490–528, 532–572, and 577–614; these read QCQI…KVYS, EECI…KLWD, GILI…QLVS, KEIS…YYFK, LKAT…RLWR, KEYT…VQWP, SEEK…SIID, SGII…QFYS, QQEF…KLWE, SFVL…KVWM, SWLC…TVWE, WDLK…CCWN, and ALEW…FLFQ. Positions 764 to 798 are disordered; the sequence is SQSTEESKEDEEMKSEHSEADSSDETEEMESQKRF.

As to quaternary structure, component of the proposed t-UTP subcomplex of the ribosomal small subunit (SSU) processome. SSU processome is composed of more than 70 proteins and the RNA chaperone small nucleolar RNA (snoRNA) U3.

It is found in the nucleus. It localises to the nucleolus. In terms of biological role, ribosome biogenesis factor. Part of the small subunit (SSU) processome, first precursor of the small eukaryotic ribosomal subunit. During the assembly of the SSU processome in the nucleolus, many ribosome biogenesis factors, an RNA chaperone and ribosomal proteins associate with the nascent pre-rRNA and work in concert to generate RNA folding, modifications, rearrangements and cleavage as well as targeted degradation of pre-ribosomal RNA by the RNA exosome. Involved in nucleolar processing of pre-18S ribosomal RNA. Required for optimal pre-ribosomal RNA transcription by RNA polymerase I. This is WD repeat-containing protein 75 (wdr75) from Xenopus laevis (African clawed frog).